Consider the following 355-residue polypeptide: Peptide chain release factor 1 (355 aa).

At glutamine 231 the chain carries N5-methylglutamine.

The protein belongs to the prokaryotic/mitochondrial release factor family. Methylated by PrmC. Methylation increases the termination efficiency of RF1.

Its subcellular location is the cytoplasm. Its function is as follows. Peptide chain release factor 1 directs the termination of translation in response to the peptide chain termination codons UAG and UAA. The chain is Peptide chain release factor 1 from Sulfurovum sp. (strain NBC37-1).